We begin with the raw amino-acid sequence, 80 residues long: Sulfur carrier protein TusA (80 aa).

The Cysteine persulfide intermediate role is filled by C17.

It belongs to the sulfur carrier protein TusA family.

The protein resides in the cytoplasm. In terms of biological role, sulfur carrier protein which probably makes part of a sulfur-relay system. The polypeptide is Sulfur carrier protein TusA (Pseudomonas entomophila (strain L48)).